We begin with the raw amino-acid sequence, 398 residues long: NADH-quinone oxidoreductase subunit D (398 aa).

Belongs to the complex I 49 kDa subunit family. As to quaternary structure, NDH-1 is composed of 14 different subunits. Subunits NuoB, C, D, E, F, and G constitute the peripheral sector of the complex.

Its subcellular location is the cell inner membrane. The enzyme catalyses a quinone + NADH + 5 H(+)(in) = a quinol + NAD(+) + 4 H(+)(out). Its function is as follows. NDH-1 shuttles electrons from NADH, via FMN and iron-sulfur (Fe-S) centers, to quinones in the respiratory chain. The immediate electron acceptor for the enzyme in this species is believed to be ubiquinone. Couples the redox reaction to proton translocation (for every two electrons transferred, four hydrogen ions are translocated across the cytoplasmic membrane), and thus conserves the redox energy in a proton gradient. The chain is NADH-quinone oxidoreductase subunit D from Bradyrhizobium sp. (strain BTAi1 / ATCC BAA-1182).